A 240-amino-acid chain; its full sequence is Splicing factor U2AF 35 kDa subunit (240 aa).

At Ala-2 the chain carries N-acetylalanine. The C3H1-type 1 zinc-finger motif lies at 12-40 (EKDKVNCSFYFKIGACRHGDRCSRLHNKP). An N6-methyllysine modification is found at Lys-39. Phosphoserine is present on residues Ser-61 and Ser-145. An RRM domain is found at 65 to 147 (LRCAVSDVEM…QPIHAELSPV (83 aa)). The C3H1-type 2 zinc finger occupies 149–176 (DFREACCRQYEMGECTRGGFCNFMHLKP). Position 165 is an omega-N-methylarginine (Arg-165). Residues 183-240 (RELYGRRRKKHRSRSRSRERRSRSRDRGRGGGGGGGGGGGGRERDRRRSRDRERSGRF) are disordered. A compositionally biased stretch (basic residues) spans 188 to 208 (RRRKKHRSRSRSRERRSRSRD). Residues 212–222 (GGGGGGGGGGG) are compositionally biased toward gly residues. Over residues 223–240 (GRERDRRRSRDRERSGRF) the composition is skewed to basic and acidic residues.

It belongs to the splicing factor SR family. In terms of assembly, identified in the spliceosome C complex. Heterodimer with U2AF2. Interacts (via RS domain) with PHF5A (via N-terminus). Interacts with ZRANB2. Interacts with SDE2. Interacts with SF3B1.

It localises to the nucleus. It is found in the nucleus speckle. Plays a critical role in both constitutive and enhancer-dependent splicing by mediating protein-protein interactions and protein-RNA interactions required for accurate 3'-splice site selection. Recruits U2 snRNP to the branch point. Directly mediates interactions between U2AF2 and proteins bound to the enhancers and thus may function as a bridge between U2AF2 and the enhancer complex to recruit it to the adjacent intron. This chain is Splicing factor U2AF 35 kDa subunit (U2AF1), found in Homo sapiens (Human).